Consider the following 255-residue polypeptide: Thiazole synthase (255 aa).

Catalysis depends on K95, which acts as the Schiff-base intermediate with DXP. Residues G156, 182 to 183 (AG), and 204 to 205 (NT) contribute to the 1-deoxy-D-xylulose 5-phosphate site.

The protein belongs to the ThiG family. In terms of assembly, homotetramer. Forms heterodimers with either ThiH or ThiS.

It localises to the cytoplasm. The catalysed reaction is [ThiS sulfur-carrier protein]-C-terminal-Gly-aminoethanethioate + 2-iminoacetate + 1-deoxy-D-xylulose 5-phosphate = [ThiS sulfur-carrier protein]-C-terminal Gly-Gly + 2-[(2R,5Z)-2-carboxy-4-methylthiazol-5(2H)-ylidene]ethyl phosphate + 2 H2O + H(+). It participates in cofactor biosynthesis; thiamine diphosphate biosynthesis. Functionally, catalyzes the rearrangement of 1-deoxy-D-xylulose 5-phosphate (DXP) to produce the thiazole phosphate moiety of thiamine. Sulfur is provided by the thiocarboxylate moiety of the carrier protein ThiS. In vitro, sulfur can be provided by H(2)S. The polypeptide is Thiazole synthase (Aeromonas salmonicida (strain A449)).